We begin with the raw amino-acid sequence, 270 residues long: Phospholysine phosphohistidine inorganic pyrophosphate phosphatase (270 aa).

Mg(2+)-binding residues include aspartate 17 and serine 19. Substrate-binding positions include 17–19, 54–55, and lysine 189; these read DIS and TN. Mg(2+) is bound at residue aspartate 214.

This sequence belongs to the HAD-like hydrolase superfamily. In terms of assembly, homodimer. Mg(2+) serves as cofactor. As to expression, expressed in brain, and at lower levels in liver and kidney. Detected in thyroid (at protein level). Expressed in liver, kidney and moderately in brain.

The protein resides in the cytoplasm. The protein localises to the nucleus. The enzyme catalyses diphosphate + H2O = 2 phosphate + H(+). Functionally, phosphatase that hydrolyzes imidodiphosphate, 3-phosphohistidine and 6-phospholysine. Has broad substrate specificity and can also hydrolyze inorganic diphosphate, but with lower efficiency. The protein is Phospholysine phosphohistidine inorganic pyrophosphate phosphatase (LHPP) of Homo sapiens (Human).